The primary structure comprises 34 residues: Photosystem I reaction center subunit XII (34 aa).

A helical transmembrane segment spans residues 5–25; sequence ISSPEIFIALVVAAHAAILAL.

The protein belongs to the PsaM family.

Its subcellular location is the cellular thylakoid membrane. This Synechococcus sp. (strain CC9902) protein is Photosystem I reaction center subunit XII.